A 1175-amino-acid polypeptide reads, in one-letter code: Pyruvate carboxylase 1 (1175 aa).

The Biotin carboxylation domain occupies 31–481; it reads EFNKVMVANR…DTYFIDEHPE (451 aa). The ATP site is built by Lys147, Glu231, and His266. The ATP-grasp domain occupies 151–348; the sequence is RQAAIEAGVQ…LVQAQIRIAE (198 aa). The active site involves Arg323. Residues 559–828 form the Pyruvate carboxyltransferase domain; that stretch reads CMITDTTFRD…DTGLSLDDIS (270 aa). Substrate is bound by residues 567–571 and Arg640; that span reads RDAHQ. Asp568 contributes to the a divalent metal cation binding site. Residues Lys737, His767, and His769 each contribute to the a divalent metal cation site. Position 737 is an N6-carboxylysine (Lys737). Thr904 provides a ligand contact to substrate. Residues 1099–1174 enclose the Biotinyl-binding domain; it reads RALPGVRGHI…SAGDLVVEVE (76 aa). Position 1140 is an N6-biotinyllysine (Lys1140).

As to quaternary structure, interacts with sir-2.2 and sir-2.3. It depends on biotin as a cofactor. Zn(2+) is required as a cofactor.

The protein resides in the cytoplasm. It carries out the reaction hydrogencarbonate + pyruvate + ATP = oxaloacetate + ADP + phosphate + H(+). Its pathway is carbohydrate biosynthesis; gluconeogenesis. Pyruvate carboxylase catalyzes a 2-step reaction, involving the ATP-dependent carboxylation of the covalently attached biotin in the first step and the transfer of the carboxyl group to pyruvate in the second. This Caenorhabditis elegans protein is Pyruvate carboxylase 1.